The sequence spans 220 residues: ATP synthase F(0) complex subunit a (220 aa).

The next 6 membrane-spanning stretches (helical) occupy residues proline 12–proline 32, tryptophan 69–threonine 89, glutamine 91–leucine 111, leucine 130–leucine 150, leucine 158–methionine 178, and alanine 183–isoleucine 203.

It belongs to the ATPase A chain family. As to quaternary structure, component of the ATP synthase complex composed at least of ATP5F1A/subunit alpha, ATP5F1B/subunit beta, ATP5MC1/subunit c (homooctomer), MT-ATP6/subunit a, MT-ATP8/subunit 8, ATP5ME/subunit e, ATP5MF/subunit f, ATP5MG/subunit g, ATP5MK/subunit k, ATP5MJ/subunit j, ATP5F1C/subunit gamma, ATP5F1D/subunit delta, ATP5F1E/subunit epsilon, ATP5PF/subunit F6, ATP5PB/subunit b, ATP5PD/subunit d, ATP5PO/subunit OSCP. ATP synthase complex consists of a soluble F(1) head domain (subunits alpha(3) and beta(3)) - the catalytic core - and a membrane F(0) domain - the membrane proton channel (subunits c, a, 8, e, f, g, k and j). These two domains are linked by a central stalk (subunits gamma, delta, and epsilon) rotating inside the F1 region and a stationary peripheral stalk (subunits F6, b, d, and OSCP). Interacts with DNAJC30; interaction is direct.

It localises to the mitochondrion inner membrane. It carries out the reaction H(+)(in) = H(+)(out). Its function is as follows. Subunit a, of the mitochondrial membrane ATP synthase complex (F(1)F(0) ATP synthase or Complex V) that produces ATP from ADP in the presence of a proton gradient across the membrane which is generated by electron transport complexes of the respiratory chain. ATP synthase complex consist of a soluble F(1) head domain - the catalytic core - and a membrane F(1) domain - the membrane proton channel. These two domains are linked by a central stalk rotating inside the F(1) region and a stationary peripheral stalk. During catalysis, ATP synthesis in the catalytic domain of F(1) is coupled via a rotary mechanism of the central stalk subunits to proton translocation. With the subunit c (ATP5MC1), forms the proton-conducting channel in the F(0) domain, that contains two crucial half-channels (inlet and outlet) that facilitate proton movement from the mitochondrial intermembrane space (IMS) into the matrix. Protons are taken up via the inlet half-channel and released through the outlet half-channel, following a Grotthuss mechanism. The protein is ATP synthase F(0) complex subunit a of Latimeria chalumnae (Coelacanth).